The primary structure comprises 697 residues: PAN2-PAN3 deadenylation complex subunit PAN3 (697 aa).

Residues 7–36 (TAKDTLCKNILIYGYCKYENKGCAFSHNRQ) form a C3H1-type zinc finger. The interval 40–67 (QQQQATNTSNNSTSVITPNSANSTASSA) is disordered. Short sequence motifs (PABPC-interacting motif-2 (PAM-2)) lie at residues 69-89 (LSSKKKFNLNTPSFQPSVSNL) and 106-126 (FKPENGVSEPDTVDSPTTQRP). The disordered stretch occupies residues 106–240 (FKPENGVSEP…SAPTPGSETP (135 aa)). Polar residues predominate over residues 119–153 (DSPTTQRPFTSKRFNVSTPSFTPTNFDFANNSNAD). Residues 172–187 (QNQQQQQQQQQQQQKQ) are compositionally biased toward low complexity. The span at 212 to 224 (GVSQSSPSTNPYF) shows a compositional bias: polar residues. The interval 308-576 (QSLSHSNLPE…DLNEFSQRLT (269 aa)) is pseudokinase domain. ATP contacts are provided by residues arginine 361, 416–423 (DYYPNSIS), and 470–471 (SK). A coiled-coil region spans residues 577-615 (PKMFNIIDSLQNSSDFIEGQLTSELENARLFRLMTKLNY). Residues 616 to 697 (LIHDNSNSEN…IDTKFRLMRE (82 aa)) form a knob domain region.

This sequence belongs to the protein kinase superfamily. PAN3 family. As to quaternary structure, homodimer. Forms a heterotrimer with a catalytic subunit PAN2 to form the poly(A)-nuclease (PAN) deadenylation complex. Interacts (via PAM-2 motif) with poly(A)-binding protein PAB1 (via PABC domain), conferring substrate specificity of the enzyme complex.

The protein resides in the cytoplasm. Its function is as follows. Regulatory subunit of the poly(A)-nuclease (PAN) deadenylation complex, one of two cytoplasmic mRNA deadenylases involved in mRNA turnover. PAN specifically shortens poly(A) tails of RNA and the activity is stimulated by poly(A)-binding protein PAB1. PAN deadenylation is followed by rapid degradation of the shortened mRNA tails by the CCR4-NOT complex. Deadenylated mRNAs are then degraded by two alternative mechanisms, namely exosome-mediated 3'-5' exonucleolytic degradation, or deadenylation-dependent mRNA decaping and subsequent 5'-3' exonucleolytic degradation by XRN1. May also be involved in post-transcriptional maturation of mRNA poly(A) tails. PAN3 acts as a positive regulator for PAN activity, recruiting the catalytic subunit PAN2 to mRNA via its interaction with RNA and with PAB1. The protein is PAN2-PAN3 deadenylation complex subunit PAN3 of Candida albicans (strain SC5314 / ATCC MYA-2876) (Yeast).